The sequence spans 120 residues: uncharacterized protein (120 aa).

The protein to M.jannaschii MJ0361.

This is an uncharacterized protein from Methanocaldococcus jannaschii (strain ATCC 43067 / DSM 2661 / JAL-1 / JCM 10045 / NBRC 100440) (Methanococcus jannaschii).